The sequence spans 198 residues: MPKVGMPKIRRPQLVSATMTVIDRVGLHGASVSLISQEAGVSSGIINHYFGGKHGLLEETMRDILRQLSCDATKRLNSLPKQAHMQRINAILDANFVGFQSESKVIKTWLAFWSYSMHDEALKRLQRVNEKRLLSHLKRELKALMSKEQADIVAQGIAALIDGIWLRGALNPEGINANKARIIINDYLEKQLTFYSQQ.

The 61-residue stretch at 8–68 folds into the HTH tetR-type domain; it reads KIRRPQLVSA…ETMRDILRQL (61 aa). The H-T-H motif DNA-binding region spans 31-50; that stretch reads SVSLISQEAGVSSGIINHYF.

Its pathway is amine and polyamine biosynthesis; betaine biosynthesis via choline pathway [regulation]. Functionally, repressor involved in the biosynthesis of the osmoprotectant glycine betaine. It represses transcription of the choline transporter BetT and the genes of BetAB involved in the synthesis of glycine betaine. The polypeptide is HTH-type transcriptional regulator BetI (Vibrio vulnificus (strain YJ016)).